The primary structure comprises 179 residues: Low molecular weight phosphotyrosine protein phosphatase (179 aa).

The Nucleophile role is filled by Cys-15. Arg-21 is a catalytic residue. The active-site Proton donor is the Asp-148.

This sequence belongs to the low molecular weight phosphotyrosine protein phosphatase family.

It localises to the cytoplasm. The enzyme catalyses O-phospho-L-tyrosyl-[protein] + H2O = L-tyrosyl-[protein] + phosphate. It carries out the reaction a phosphate monoester + H2O = an alcohol + phosphate. Its function is as follows. Acts on tyrosine phosphorylated proteins, low-MW aryl phosphates and natural and synthetic acyl phosphates. The sequence is that of Low molecular weight phosphotyrosine protein phosphatase (acp1) from Dictyostelium discoideum (Social amoeba).